We begin with the raw amino-acid sequence, 142 residues long: uncharacterized protein (142 aa).

In terms of assembly, homodimer.

This is an uncharacterized protein from Bacillus subtilis (strain 168).